The primary structure comprises 455 residues: UDP-N-acetylmuramoylalanine--D-glutamate ligase (455 aa).

117–123 (GTNGKTT) contacts ATP.

Belongs to the MurCDEF family.

Its subcellular location is the cytoplasm. The enzyme catalyses UDP-N-acetyl-alpha-D-muramoyl-L-alanine + D-glutamate + ATP = UDP-N-acetyl-alpha-D-muramoyl-L-alanyl-D-glutamate + ADP + phosphate + H(+). The protein operates within cell wall biogenesis; peptidoglycan biosynthesis. Cell wall formation. Catalyzes the addition of glutamate to the nucleotide precursor UDP-N-acetylmuramoyl-L-alanine (UMA). The sequence is that of UDP-N-acetylmuramoylalanine--D-glutamate ligase from Pelotomaculum thermopropionicum (strain DSM 13744 / JCM 10971 / SI).